The chain runs to 157 residues: Endoribonuclease YbeY (157 aa).

Zn(2+)-binding residues include H116, H120, and H126.

Belongs to the endoribonuclease YbeY family. The cofactor is Zn(2+).

Its subcellular location is the cytoplasm. Its function is as follows. Single strand-specific metallo-endoribonuclease involved in late-stage 70S ribosome quality control and in maturation of the 3' terminus of the 16S rRNA. This Pseudarthrobacter chlorophenolicus (strain ATCC 700700 / DSM 12829 / CIP 107037 / JCM 12360 / KCTC 9906 / NCIMB 13794 / A6) (Arthrobacter chlorophenolicus) protein is Endoribonuclease YbeY.